The chain runs to 180 residues: DHKNSPEKFYDNIEHHYEFIGDKLIIGKFCAIAEGVKFIMNGANHRMDGITTYPFNIFGCGWEKVTPTIEQLPFKGDTVIGNDVWIGQNVTIMPGVIIGDGAIIAANSTVVKSVEPYSIYSGNPAKFIKKRFSDEKIEFLLKLEWWNWSGEEIFDNLEILTSEAGLEELMNKYSKRDAIN.

It belongs to the transferase hexapeptide repeat family.

The protein is Probable macrolide acetyltransferase of Lysinibacillus sphaericus (Bacillus sphaericus).